Reading from the N-terminus, the 315-residue chain is Protein sprouty homolog 2 (315 aa).

The span at 1–15 (MEARAQSGNGSQPLL) shows a compositional bias: polar residues. The segment at 1–140 (MEARAQSGNG…SEQRLLGSSF (140 aa)) is disordered. The span at 20–32 (DGGRPRGEPDPRD) shows a compositional bias: basic and acidic residues. Positions 108 to 140 (SRSISTVSSGSRSSTRTSTSSSSSEQRLLGSSF) are enriched in low complexity. The required for interaction with CAV1 stretch occupies residues 118-315 (SRSSTRTSTS…VPRRNFEKPT (198 aa)). The SPR domain occupies 177 to 291 (RCEDCGKCKC…CYDRVNRPGC (115 aa)). The tract at residues 178 to 315 (CEDCGKCKCK…VPRRNFEKPT (138 aa)) is required for interaction with TESK1.

This sequence belongs to the sprouty family. As to quaternary structure, forms heterodimers with SPRY1. Forms a tripartite complex containing GAB1, METTL13 and SPRY2. Within the complex interacts with METTL13. Interacts with RAF1. Interacts (via C-terminus) with TESK1 (via C-terminus); the interaction disrupts SPRY2 interaction with GRB2, potentially via disruption of SPRY2 serine dephosphorylation. Interacts with PPP2R1A/PP2A-A and PPP2CA/PP2A-C; the interaction with PPP2CA/PP2A-C is inhibited by interaction with TESK1, possibly by vesicular sequestration of SPRY2. Inhibition of the interaction with the serine/threonine-protein phosphatase 2A (PP2A) holoenzyme results in loss of PP2A-mediated dephosphorylation, resulting in the loss of SPRY2 interaction with GRB2. Interacts with GRB2. Interacts with CBL/C-CBL; the interaction inhibits CBL-mediated ubiquitination of EGFR. Interacts (via C-terminus) with CAV1 (via C-terminus). Post-translationally, cleaved at Pro-144 by the prolyl endopeptidase FAP (seprase) activity (in vitro).

It localises to the cytoplasm. It is found in the cytoskeleton. Its subcellular location is the cell projection. The protein resides in the ruffle membrane. Its function is as follows. Antagonist of fibroblast growth factor (FGF) pathways via inhibition of FGF-mediated phosphorylation of ERK1/2. Thereby acts as an antagonist of FGF-induced retinal lens fiber differentiation, may inhibit limb bud outgrowth and may negatively modulate respiratory organogenesis. Inhibits TGFB-induced epithelial-to-mesenchymal transition in retinal lens epithelial cells. Inhibits CBL/C-CBL-mediated EGFR ubiquitination. The sequence is that of Protein sprouty homolog 2 (SPRY2) from Pongo abelii (Sumatran orangutan).